A 588-amino-acid polypeptide reads, in one-letter code: Calicin (588 aa).

A BTB domain is found at 12-124 (SFVLQNLNRQ…RLRVHCNDFL (113 aa)). The region spanning 133–235 (CLRYLFLAEL…NAVSNKTLVF (103 aa)) is the BACK domain. Serine 149 is subject to Phosphoserine. 6 Kelch repeats span residues 280-327 (SVVI…SAGR), 328-375 (YIYI…TCGG), 377-423 (VYSV…TKGD), 425-475 (HLYI…SFQQ), 476-525 (DNIL…IGDS), and 526-580 (KVFV…LAKL).

In terms of assembly, interacts with CYLC1; the interaction may be relevant for proper acrosome attachment to the nuclear envelope. In terms of tissue distribution, expressed in testis, in spermatozoa (at protein level).

It is found in the cytoplasm. The protein localises to the cytoskeleton. It localises to the perinuclear theca. Its subcellular location is the calyx. Its function is as follows. Required for both nuclear and acrosomal shaping during spermiogenesis. This is Calicin (CCIN) from Homo sapiens (Human).